The following is a 201-amino-acid chain: MAAFPPGGTFFDTLKRSFTDVPVESGKIATTQFLEACESLTTLFDVLGSTAFKPVKSDMTGNIKKIRDRQLAAPVDSETLQDLVRNELATKKHTATEGLVWLNRALDFTAQALRQNLTNSGEEVSVSFRSAYGNTLSKHHSFMIKPIFSAAMSATPYRKDFYAKLGDDQARVEKELGVWLSSLENIVKILNDFLASKEAKW.

A glycolipid transfer protein homology domain region spans residues 28-168 (IATTQFLEAC…KDFYAKLGDD (141 aa)).

Its function is as follows. Cargo transport protein that plays a key role in transport and secretion of liamocins, glycolipids (also called heavy oils) composed of a single mannitol or arabitol headgroup linked to either three, four or even six 3,5-dihydroxydecanoic ester tail-groups. This Aureobasidium melanogenum (Aureobasidium pullulans var. melanogenum) protein is Glycolipid transfer protein.